A 222-amino-acid chain; its full sequence is Leucyl/phenylalanyl-tRNA--protein transferase (222 aa).

This sequence belongs to the L/F-transferase family.

It is found in the cytoplasm. The enzyme catalyses N-terminal L-lysyl-[protein] + L-leucyl-tRNA(Leu) = N-terminal L-leucyl-L-lysyl-[protein] + tRNA(Leu) + H(+). It carries out the reaction N-terminal L-arginyl-[protein] + L-leucyl-tRNA(Leu) = N-terminal L-leucyl-L-arginyl-[protein] + tRNA(Leu) + H(+). It catalyses the reaction L-phenylalanyl-tRNA(Phe) + an N-terminal L-alpha-aminoacyl-[protein] = an N-terminal L-phenylalanyl-L-alpha-aminoacyl-[protein] + tRNA(Phe). In terms of biological role, functions in the N-end rule pathway of protein degradation where it conjugates Leu, Phe and, less efficiently, Met from aminoacyl-tRNAs to the N-termini of proteins containing an N-terminal arginine or lysine. This Legionella pneumophila (strain Corby) protein is Leucyl/phenylalanyl-tRNA--protein transferase.